A 303-amino-acid polypeptide reads, in one-letter code: NmrA-like family domain-containing oxidoreductase FVEG_08287 (303 aa).

Residues 8-13 (LGAGEL), 8-14 (LGAGELG), 36-39 (LRPS), R37, 56-57 (QG), 77-79 (IFR), and 159-162 (FMSF) contribute to the NADP(+) site.

This sequence belongs to the NmrA-type oxidoreductase family.

NmrA-like family domain-containing oxidoreductase; part of the Fusarium detoxification of benzoxazolinone cluster 1 (FDB1) involved in the degradation of benzoxazolinones produced by the host plant. Maize, wheat, and rye produce the 2 benzoxazinone phytoanticipins 2,4-dihy-droxy-7-methoxy-1,4-benzoxazin-3-one (DIMBOA) and 2,4-dihydroxy-1,4-benzoxazin-3-one (DIBOA) that, due to their inherent instability once released, spontaneously degrade to the more stable corresponding benzoxazolinones, 6-methoxy-2-benzoxazolinone (MBOA) and 2-benzoxazolinone (BOA), respectively. The first step in the detoxification of benzoxazolinones involves the hydrolysis of the cyclic ester bond of benzoxazolinones by the FDB1 cluster gamma-lactamase MBL1 to aminophenols. MBL1 is able to convert BOA into 2-aminophenol (2-AP), as well as MBOA into 5-methoxy-2-aminophenol (2-AMP). The FDB2 cluster N-malonyltransferase FDB2/NAT1 then metabolizes aminophenols via N-malonylation to non-toxic malonamic acids. FDB2/NAT1 converts 2-AP into N-(2-hydroxyphenyl) malonamic acid (HPMA) and 2-AMP into N-(2-hydroxy-4-methoxyphenyl) malonamic acid (HMPMA). The duplicated dienlactone hydrolases DLH1 and DLH2 may provide redundant function for hydrolyzing the lactone moiety in the BOA molecule. The roles of the amidases an other enzymes encoded by the 2 FDB clusters have not been identified so far. The sequence is that of NmrA-like family domain-containing oxidoreductase FVEG_08287 from Gibberella moniliformis (strain M3125 / FGSC 7600) (Maize ear and stalk rot fungus).